Here is a 386-residue protein sequence, read N- to C-terminus: Succinyl-diaminopimelate desuccinylase (386 aa).

Histidine 77 lines the Zn(2+) pocket. The active site involves aspartate 79. Aspartate 110 contributes to the Zn(2+) binding site. The active-site Proton acceptor is glutamate 144. Zn(2+) contacts are provided by glutamate 145, glutamate 173, and histidine 359.

Belongs to the peptidase M20A family. DapE subfamily. As to quaternary structure, homodimer. Zn(2+) is required as a cofactor. The cofactor is Co(2+).

It catalyses the reaction N-succinyl-(2S,6S)-2,6-diaminopimelate + H2O = (2S,6S)-2,6-diaminopimelate + succinate. It functions in the pathway amino-acid biosynthesis; L-lysine biosynthesis via DAP pathway; LL-2,6-diaminopimelate from (S)-tetrahydrodipicolinate (succinylase route): step 3/3. Its function is as follows. Catalyzes the hydrolysis of N-succinyl-L,L-diaminopimelic acid (SDAP), forming succinate and LL-2,6-diaminopimelate (DAP), an intermediate involved in the bacterial biosynthesis of lysine and meso-diaminopimelic acid, an essential component of bacterial cell walls. The polypeptide is Succinyl-diaminopimelate desuccinylase (Ralstonia pickettii (strain 12J)).